We begin with the raw amino-acid sequence, 124 residues long: Glutaredoxin-2 (124 aa).

Residues C13 and C16 are joined by a disulfide bond.

The protein belongs to the glutaredoxin family. As to quaternary structure, homodimer.

It is found in the host cytoplasm. Functionally, glutaredoxin necessary for virion morphogenesis and virus replication. Functions as a thiol-disulfide transfer protein between membrane-associated OPG128 and substrates OPG095 or OPG053. The complete pathway for formation of disulfide bonds in intracellular virion membrane proteins sequentially involves oxidation of OPG072, OPG128 and OPG088. Exhibit thioltransferase and dehydroascorbate reductase activities in vitro. The chain is Glutaredoxin-2 (OPG088) from Bos taurus (Bovine).